Here is a 228-residue protein sequence, read N- to C-terminus: uncharacterized protein (228 aa).

Disordered regions lie at residues 1–62 and 160–228; these read MQRP…VGRF and SPRP…LSGV. The span at 13–33 shows a compositional bias: low complexity; that stretch reads AASTRAPPRPSAPQQGRRQPS. Over residues 167–176 the composition is skewed to polar residues; it reads RGQQVTQDGP.

This is an uncharacterized protein from Homo sapiens (Human).